A 593-amino-acid polypeptide reads, in one-letter code: Alanine--tRNA ligase (593 aa).

Zn(2+) contacts are provided by His456, His460, Cys558, and His562.

It belongs to the class-II aminoacyl-tRNA synthetase family. Zn(2+) serves as cofactor.

The protein localises to the cytoplasm. It catalyses the reaction tRNA(Ala) + L-alanine + ATP = L-alanyl-tRNA(Ala) + AMP + diphosphate. Functionally, catalyzes the attachment of alanine to tRNA(Ala) in a two-step reaction: alanine is first activated by ATP to form Ala-AMP and then transferred to the acceptor end of tRNA(Ala). Also edits incorrectly charged Ser-tRNA(Ala) and Gly-tRNA(Ala) via its editing domain. The polypeptide is Alanine--tRNA ligase (alaS) (Borrelia hermsii (strain HS1 / DAH)).